A 312-amino-acid polypeptide reads, in one-letter code: MNITFLGTSSGVPTLTRNVSSLALKLSQTAEVWLFDCGEGTQHQLMKSNIKSSQIKKIFITHMHGDHIYGLPGLLATLGLSGNSNGIEIYGPSELKSFVTSALESSFCKLSFPLRFRAVEDFASLNKILFENDKLKVHCACLKHRLPAYGYRVSEKDKPGVFDIKKAEDSNIPPGPIYSELQAGKTVQLKDGRSFNGQDFCGPPRKGESFVYCTDTVFSKSAVNLSKNADLLVHESTFSKEDEKMAYEKLHSTTIMAAKTALLSNVKKLIITHLSPRYTQRSSIKPSDLLKEAQKIFPNTYLAKDFLTAEIK.

Zn(2+) contacts are provided by H62, H64, D66, H67, H144, D215, and H273. D66 (proton acceptor) is an active-site residue.

The protein belongs to the RNase Z family. As to quaternary structure, homodimer. The cofactor is Zn(2+).

The enzyme catalyses Endonucleolytic cleavage of RNA, removing extra 3' nucleotides from tRNA precursor, generating 3' termini of tRNAs. A 3'-hydroxy group is left at the tRNA terminus and a 5'-phosphoryl group is left at the trailer molecule.. Zinc phosphodiesterase, which displays some tRNA 3'-processing endonuclease activity. Probably involved in tRNA maturation, by removing a 3'-trailer from precursor tRNA. In Prochlorococcus marinus subsp. pastoris (strain CCMP1986 / NIES-2087 / MED4), this protein is Ribonuclease Z.